A 370-amino-acid polypeptide reads, in one-letter code: MTVNDAVVFILAAFLLWGAADYCLGNRWGLGERFADGFKAMGPLALSMIGIVSLAPVLAAILIPIVAPFYTAIGADPSSFANTILAIDMGGYALAGEMAKDPQAGLFSWVFLGTMMGPAIVFTIPVALGIIEKEDHPYFAKGILIGLCTVPIGCLIGGLCAGFDIGMIGKNLLIPSLLSAVIAFGLWRYTDRMIQLFHLFGKAVSMVAIIGLAAVSVETMTGIVLIPGMENVETGIQTTGTIAIALAGAFPMTAFITKTFKKPLQALGKCLHLDETATAGLVTSLAHHIPMLASLKDMTPRGKVINVAFAVSGAFVLGSHLGFVAGMKKEMAAAMIIGKLAGGVTAAAAAAWMTPAQSAKQQKRISASHS.

The next 10 membrane-spanning stretches (helical) occupy residues Ala6 to Asn26, Ile49 to Phe69, Ser79 to Ala99, Phe111 to Ile131, Ile143 to Phe163, Met167 to Trp187, Met206 to Ile226, Ile236 to Ile256, Val307 to Met327, and Ala333 to Met353.

It belongs to the EutH family.

It is found in the cell membrane. This is an uncharacterized protein from Bacillus subtilis (strain 168).